Here is a 593-residue protein sequence, read N- to C-terminus: NADH-quinone oxidoreductase subunit C/D (593 aa).

The interval 1-184 is NADH dehydrogenase I subunit C; that stretch reads MTADNALYIP…DPYSLTLAKQ (184 aa). The interval 208–593 is NADH dehydrogenase I subunit D; sequence DYMFLNLGPN…IDFVMADVDR (386 aa).

It in the N-terminal section; belongs to the complex I 30 kDa subunit family. This sequence in the C-terminal section; belongs to the complex I 49 kDa subunit family. NDH-1 is composed of 13 different subunits. Subunits NuoB, CD, E, F, and G constitute the peripheral sector of the complex.

It is found in the cell inner membrane. It catalyses the reaction a quinone + NADH + 5 H(+)(in) = a quinol + NAD(+) + 4 H(+)(out). Functionally, NDH-1 shuttles electrons from NADH, via FMN and iron-sulfur (Fe-S) centers, to quinones in the respiratory chain. The immediate electron acceptor for the enzyme in this species is believed to be ubiquinone. Couples the redox reaction to proton translocation (for every two electrons transferred, four hydrogen ions are translocated across the cytoplasmic membrane), and thus conserves the redox energy in a proton gradient. The polypeptide is NADH-quinone oxidoreductase subunit C/D (Pseudomonas syringae pv. tomato (strain ATCC BAA-871 / DC3000)).